Consider the following 239-residue polypeptide: Orotidine 5'-phosphate decarboxylase (239 aa).

Residues Asp10, Lys32, 59-68 (DLKLHDIPNT), Thr122, Arg184, Gln193, Gly213, and Arg214 contribute to the substrate site. The Proton donor role is filled by Lys61.

Belongs to the OMP decarboxylase family. Type 1 subfamily. In terms of assembly, homodimer.

The enzyme catalyses orotidine 5'-phosphate + H(+) = UMP + CO2. The protein operates within pyrimidine metabolism; UMP biosynthesis via de novo pathway; UMP from orotate: step 2/2. Functionally, catalyzes the decarboxylation of orotidine 5'-monophosphate (OMP) to uridine 5'-monophosphate (UMP). This chain is Orotidine 5'-phosphate decarboxylase, found in Geobacillus sp. (strain WCH70).